We begin with the raw amino-acid sequence, 169 residues long: Probable inosine/xanthosine triphosphatase (169 aa).

Position 7–12 (Ser7–Lys12) interacts with substrate. Residue Glu35 participates in Mg(2+) binding.

The protein belongs to the YjjX NTPase family. As to quaternary structure, homodimer. Mg(2+) serves as cofactor. The cofactor is Mn(2+).

The enzyme catalyses XTP + H2O = XDP + phosphate + H(+). The catalysed reaction is ITP + H2O = IDP + phosphate + H(+). Its function is as follows. Phosphatase that hydrolyzes non-canonical purine nucleotides such as XTP and ITP to their respective diphosphate derivatives. Probably excludes non-canonical purines from DNA/RNA precursor pool, thus preventing their incorporation into DNA/RNA and avoiding chromosomal lesions. This Sulfurisphaera tokodaii (strain DSM 16993 / JCM 10545 / NBRC 100140 / 7) (Sulfolobus tokodaii) protein is Probable inosine/xanthosine triphosphatase.